A 608-amino-acid chain; its full sequence is UvrABC system protein C (608 aa).

The GIY-YIG domain maps to 15–93 (HQPGVYRMYN…IKQYLPKYNV (79 aa)). The UVR domain maps to 203–238 (RQVIQTLVKQMESASQSLNFEKAAIIRDQIQAMRRV).

It belongs to the UvrC family. In terms of assembly, interacts with UvrB in an incision complex.

The protein localises to the cytoplasm. Its function is as follows. The UvrABC repair system catalyzes the recognition and processing of DNA lesions. UvrC both incises the 5' and 3' sides of the lesion. The N-terminal half is responsible for the 3' incision and the C-terminal half is responsible for the 5' incision. The polypeptide is UvrABC system protein C (Aliivibrio fischeri (strain ATCC 700601 / ES114) (Vibrio fischeri)).